We begin with the raw amino-acid sequence, 160 residues long: Phosphopantetheine adenylyltransferase (160 aa).

T9 is a substrate binding site. ATP is bound by residues 9 to 10 (TF) and H17. Positions 41, 73, and 87 each coordinate substrate. ATP contacts are provided by residues 88–90 (GLR), E98, and 123–129 (FSYTSSS).

This sequence belongs to the bacterial CoaD family. In terms of assembly, homohexamer. It depends on Mg(2+) as a cofactor.

Its subcellular location is the cytoplasm. It catalyses the reaction (R)-4'-phosphopantetheine + ATP + H(+) = 3'-dephospho-CoA + diphosphate. It functions in the pathway cofactor biosynthesis; coenzyme A biosynthesis; CoA from (R)-pantothenate: step 4/5. Reversibly transfers an adenylyl group from ATP to 4'-phosphopantetheine, yielding dephospho-CoA (dPCoA) and pyrophosphate. This chain is Phosphopantetheine adenylyltransferase, found in Opitutus terrae (strain DSM 11246 / JCM 15787 / PB90-1).